The primary structure comprises 408 residues: MKFVDEVSIRVKAGDGGNGCMSFRREKFIENGGPNGGDGGDGGSVYMVADENLNTLVDYRYTRHHEAQRGSNGGSTDCTGKKGEDLFLRVPVGTTVIDASTQEVIGDLVTPGQKLMVAQGGWHGLGNTRFKSSTNRAPRQTTPGKPGDQRDLKMEMKVLADVGLLGLPNAGKSTFIRSVSAAKPKVADYPFTTLVPNLGVVSVDRWKSFVIADIPGLIEGASEGAGLGIRFLKHLARTRVLLHLVDIAPLDESSPADAAEVIVNELTRFSPSLAERERWLVLNKSDMVMDDERDERVQEVIDRLEWEGPVYVISAISKQGTDKLSHDLMRYLEDRADRLANDPAYAEELADLDQRIEDEARAQLQALDDARTLRRTGVKSVHDIGDDDGWDDDFEDDEDGPEIIYVRD.

The region spanning 1 to 159 (MKFVDEVSIR…RDLKMEMKVL (159 aa)) is the Obg domain. The disordered stretch occupies residues 127–150 (NTRFKSSTNRAPRQTTPGKPGDQR). Positions 129–143 (RFKSSTNRAPRQTTP) are enriched in polar residues. One can recognise an OBG-type G domain in the interval 160–333 (ADVGLLGLPN…LSHDLMRYLE (174 aa)). GTP is bound by residues 166–173 (GLPNAGKS), 191–195 (FTTLV), 213–216 (DIPG), 283–286 (NKSD), and 314–316 (SAI). Residues Ser-173 and Thr-193 each coordinate Mg(2+). A disordered region spans residues 382–408 (HDIGDDDGWDDDFEDDEDGPEIIYVRD). Residues 385 to 401 (GDDDGWDDDFEDDEDGP) are compositionally biased toward acidic residues.

This sequence belongs to the TRAFAC class OBG-HflX-like GTPase superfamily. OBG GTPase family. In terms of assembly, monomer. Mg(2+) serves as cofactor.

It localises to the cytoplasm. Its function is as follows. An essential GTPase which binds GTP, GDP and possibly (p)ppGpp with moderate affinity, with high nucleotide exchange rates and a fairly low GTP hydrolysis rate. Plays a role in control of the cell cycle, stress response, ribosome biogenesis and in those bacteria that undergo differentiation, in morphogenesis control. The protein is GTPase Obg of Pseudomonas putida (strain GB-1).